Here is a 316-residue protein sequence, read N- to C-terminus: MNQLDALRQMTVVVADTGDIDAIKAYQPEDATTNPSLVLSASALPQYAPLIDEAIAYAKAKSNDKAQQLIDAEDKLAVNIGLEILKVVKGRISTEVDARYSYDTEKTIAKARKLIALYNEAGISNDRILIKIASTWQGIKAAEQLEKEGINCNLTLLFSQAQARACAEAGVYLISPFVGRILDWYKANSDKKEYAPAEDPGVVSVTSIYNYYKQHGYNTVVMGASFRNAGEITELAGCDRLTIAPALLKELQESEAPLVRKLEYKGEVKARPAPMTEAEFYWEHNQDPMAVEKLAEGIRKFAIDQEKLEAMLLAKF.

Lys131 serves as the catalytic Schiff-base intermediate with substrate.

It belongs to the transaldolase family. Type 1 subfamily. As to quaternary structure, homodimer.

It localises to the cytoplasm. The catalysed reaction is D-sedoheptulose 7-phosphate + D-glyceraldehyde 3-phosphate = D-erythrose 4-phosphate + beta-D-fructose 6-phosphate. Its pathway is carbohydrate degradation; pentose phosphate pathway; D-glyceraldehyde 3-phosphate and beta-D-fructose 6-phosphate from D-ribose 5-phosphate and D-xylulose 5-phosphate (non-oxidative stage): step 2/3. Functionally, transaldolase is important for the balance of metabolites in the pentose-phosphate pathway. The sequence is that of Transaldolase from Glaesserella parasuis serovar 5 (strain SH0165) (Haemophilus parasuis).